The chain runs to 874 residues: MKSAEIREAFLRFFEEQGHTRVASSSLIPGNDPTLLFTNAGMNQFKDCFLGQEKRAYTRAVSSQKCVRAGGKHNDLENVGYTARHHTFFEMLGNFSFGDYFKRDAITYAWNFLTSEKWLNLPKEKLWVTVYASDDEAYDIWTKEVGVPAERMVRIGDNKGAPYASDNFWTMGDTGPCGPCTEIFYDHGADIWGGPPGSPEEDGDRYIEIWNNVFMQFNRTADGVLHPLPAPSVDTGMGLERISAVLQHVHSNYEIDLFQSLLAASAKAIGCTNDAQASLKVVADHIRSCGFLIADGVLPSNEGRGYVLRRIIRRACRHGNKLGAKGSFFYLIVAALVAEMGEAFPELKSQQAHIERVLKAEEEQFAKTLEQGLKILEQDLAELKGDVVPGDVVFKLYDTYGFPMDLTADIARERSLTIDEAGFEREMEAQRVRARSASSFGLDYNSLVKVDVDTEFTGYHATSGSAKVVALYKDGQSVDVLSEGQEGVVVLNQTPFYAESGGQVGDCGYLQAGNSRFDVRDTTKTGGAFLHHGVLASGSLIVGAPVETHVEADVRHATSLNHSATHLLHAALRKVLGDHVQQKGSLVDSQRLRFDFSHFEAIKPEQIKALEDIVNAEIRKNSAVETEETDIETAKQKGAMALFGEKYGDNVRVLSMGGDFSVELCGGIHANRTGDIGLLKIISEGGVASGVRRIEAVTGAAALAYLNAAEEQLKEAASLVKGSRDNLIDKLSAVLERNRALEKQLEQLQAKAAAAAGDDLSASAVDVKGVKVLAVRLDGQDGKALLALVDQLKNKLGRAVILLGSVHEEKVVLVAGVTKDLTGQLKAGDLMKQAAAAVGGKGGGRPDMAQGGGVDAGALDGALALTVPFVEQGL.

4 residues coordinate Zn(2+): H562, H566, C665, and H669.

Belongs to the class-II aminoacyl-tRNA synthetase family. It depends on Zn(2+) as a cofactor.

It is found in the cytoplasm. It carries out the reaction tRNA(Ala) + L-alanine + ATP = L-alanyl-tRNA(Ala) + AMP + diphosphate. Functionally, catalyzes the attachment of alanine to tRNA(Ala) in a two-step reaction: alanine is first activated by ATP to form Ala-AMP and then transferred to the acceptor end of tRNA(Ala). Also edits incorrectly charged Ser-tRNA(Ala) and Gly-tRNA(Ala) via its editing domain. The protein is Alanine--tRNA ligase of Pseudomonas fluorescens (strain Pf0-1).